The following is a 549-amino-acid chain: Thermosome subunit (549 aa).

Positions 528 to 538 are enriched in basic and acidic residues; it reads EKEKEGEKGGG. The disordered stretch occupies residues 528–549; sequence EKEKEGEKGGGSEEFSGSSDLD. Residues 540–549 are compositionally biased toward low complexity; it reads EEFSGSSDLD.

The protein belongs to the TCP-1 chaperonin family. In terms of assembly, forms an oligomeric complex of eight-membered rings.

Its function is as follows. Molecular chaperone; binds unfolded polypeptides in vitro, and has a weak ATPase activity. The polypeptide is Thermosome subunit (ths) (Pyrococcus horikoshii (strain ATCC 700860 / DSM 12428 / JCM 9974 / NBRC 100139 / OT-3)).